A 155-amino-acid chain; its full sequence is Immunoglobulin domain-containing protein oig-4 (155 aa).

An N-terminal signal peptide occupies residues 1 to 22; it reads MSFRLWGRCIFFFCFLLEAIDS. Asn-55 and Asn-114 each carry an N-linked (GlcNAc...) asparagine glycan. The Ig-like C2-type domain occupies 73 to 154; the sequence is GYKLLIICKA…MAKNFKAEYT (82 aa). Residues Cys-80 and Cys-136 are joined by a disulfide bond.

As to quaternary structure, interacts with the non-alpha subunit of nicotinic acetylcholine receptor unc-29 and lev-10 to stabilize the complex formed between unc-29 and lev-10. As to expression, expressed in body wall muscle cells, the pharyngeal muscle cell pm6 and in four head neurons.

The protein resides in the synapse. It localises to the secreted. Required for the localization of acetylcholine receptors at neuromuscular junctions and for subsequently controlling the response evoked by receptor stimulation. This is Immunoglobulin domain-containing protein oig-4 from Caenorhabditis elegans.